The sequence spans 590 residues: NADH-ubiquinone oxidoreductase chain 5 (590 aa).

18 consecutive transmembrane segments (helical) span residues 1–21, 28–48, 58–78, 81–101, 113–133, 136–156, 176–198, 245–265, 273–293, 310–330, 333–353, 372–392, 395–415, 428–450, 461–481, 501–521, 536–556, and 568–588; these read MFLI…SFMF, FWLS…SFLM, YYDF…TYVC, FYMF…FYAF, FLII…SYDF, AYCG…YFWY, VLLI…TFYF, ALIH…FVYW, YFYN…LCVF, ISFS…LFFC, MFYK…FFGL, LLLI…GFYC, MLLA…LFIS, FLLF…FLLF, ISLY…CIFV, IAIF…GCLF, IFFV…YFVC, and FVIY…LWIL.

This sequence belongs to the complex I subunit 5 family.

It is found in the mitochondrion inner membrane. It carries out the reaction a ubiquinone + NADH + 5 H(+)(in) = a ubiquinol + NAD(+) + 4 H(+)(out). Functionally, core subunit of the mitochondrial membrane respiratory chain NADH dehydrogenase (Complex I) that is believed to belong to the minimal assembly required for catalysis. Complex I functions in the transfer of electrons from NADH to the respiratory chain. The immediate electron acceptor for the enzyme is believed to be ubiquinone. The sequence is that of NADH-ubiquinone oxidoreductase chain 5 (ND5) from Trypanosoma brucei brucei.